Reading from the N-terminus, the 88-residue chain is Large ribosomal subunit protein bL27 (88 aa).

Residues 1–22 are disordered; it reads MAQKKAGGSSRNGRDSAGRRLG.

Belongs to the bacterial ribosomal protein bL27 family.

In Gluconobacter oxydans (strain 621H) (Gluconobacter suboxydans), this protein is Large ribosomal subunit protein bL27.